The sequence spans 385 residues: 8-amino-7-oxononanoate synthase (385 aa).

Residue Arg-21 participates in substrate binding. Residue 108-109 (GF) coordinates pyridoxal 5'-phosphate. Residue His-133 coordinates substrate. Residues Ser-179, His-207, and Thr-233 each coordinate pyridoxal 5'-phosphate. Lys-236 carries the N6-(pyridoxal phosphate)lysine modification. Thr-352 contacts substrate.

This sequence belongs to the class-II pyridoxal-phosphate-dependent aminotransferase family. BioF subfamily. Homodimer. It depends on pyridoxal 5'-phosphate as a cofactor.

It catalyses the reaction 6-carboxyhexanoyl-[ACP] + L-alanine + H(+) = (8S)-8-amino-7-oxononanoate + holo-[ACP] + CO2. Its pathway is cofactor biosynthesis; biotin biosynthesis. Catalyzes the decarboxylative condensation of pimeloyl-[acyl-carrier protein] and L-alanine to produce 8-amino-7-oxononanoate (AON), [acyl-carrier protein], and carbon dioxide. The polypeptide is 8-amino-7-oxononanoate synthase (Klebsiella pneumoniae subsp. pneumoniae (strain ATCC 700721 / MGH 78578)).